A 913-amino-acid chain; its full sequence is Sterol uptake control protein 2 (913 aa).

The zn(2)-C6 fungal-type DNA-binding region spans 50 to 80 (GCDNCKRRRVKCDEGKPACRKCTNMKLECQY). Disordered regions lie at residues 103-173 (GSVE…SMGL) and 216-258 (GNMG…LAGS). Phosphothreonine is present on Thr-122. Positions 150–164 (SESEEKSSAPIEDKN) are enriched in basic and acidic residues. Over residues 222 to 241 (QLQQQQQVQQQSQPQTQAQQ) the composition is skewed to low complexity. Residues 303–346 (QQHQQVQLQQYQQLRQEQHQQVQQQQQEQLQQYQQHFLQQQQQV) are a coiled coil. 2 disordered regions span residues 347-385 (LLQQ…TLNS) and 453-489 (MQEH…GSAS). The span at 374-385 (LQSQTSETTLNS) shows a compositional bias: polar residues. Positions 440 to 472 (ATKASNAEEALANMQEHHERAAASVKENDGQLS) form a coiled coil. The span at 454–468 (QEHHERAAASVKEND) shows a compositional bias: basic and acidic residues. Polar residues predominate over residues 469–487 (GQLSDTKSPAPSNNAQGGS). Ser-519 is modified (phosphoserine). Residues 552-562 (EPTISLQTSQT) are compositionally biased toward polar residues. The interval 552-571 (EPTISLQTSQTENEDDASRQ) is disordered.

Its subcellular location is the nucleus. Transcription factor that is involved in activation of anaerobic genes such as DAN/TIR cell wall mannoprotein genes and YML083c. Appears to bind to anaerobic response elements (AR1) with the consensus sequence 5'-TCGTTYAG-3' present in the promoter regions of DAN/TIR genes. Involved in sterol uptake and regulation of the sterol biosynthesis. Binds to sterol regulatory elements (SRE) with the consensus sequence 5'-TCGTATA-3' present in ERG2 and ERG3 promoters. May be involved in down-regulation of CWP2 during anaerobic adaptation. This is Sterol uptake control protein 2 (UPC2) from Saccharomyces cerevisiae (strain ATCC 204508 / S288c) (Baker's yeast).